The sequence spans 412 residues: Argininosuccinate synthase (412 aa).

ATP contacts are provided by residues 20-28 and alanine 48; that span reads AYSGGLDTS. Tyrosine 100 and serine 105 together coordinate L-citrulline. Residue glycine 130 coordinates ATP. Positions 132, 136, and 137 each coordinate L-aspartate. Asparagine 136 serves as a coordination point for L-citrulline. Positions 140, 189, 198, 274, and 286 each coordinate L-citrulline.

This sequence belongs to the argininosuccinate synthase family. Type 1 subfamily. Homotetramer.

It is found in the cytoplasm. The catalysed reaction is L-citrulline + L-aspartate + ATP = 2-(N(omega)-L-arginino)succinate + AMP + diphosphate + H(+). The protein operates within amino-acid biosynthesis; L-arginine biosynthesis; L-arginine from L-ornithine and carbamoyl phosphate: step 2/3. This is Argininosuccinate synthase from Shewanella halifaxensis (strain HAW-EB4).